A 506-amino-acid polypeptide reads, in one-letter code: Steroid (22S)-hydroxylase (506 aa).

Residues 12 to 32 form a helical membrane-spanning segment; it reads LLFFLPFILLALLTFYTTTVA. Cys449 contributes to the heme binding site.

Belongs to the cytochrome P450 family. It depends on heme as a cofactor.

It localises to the membrane. It catalyses the reaction a C28-steroid + reduced [NADPH--hemoprotein reductase] + O2 = a (22S)-22-hydroxy C28-steroid + oxidized [NADPH--hemoprotein reductase] + H2O + H(+). The enzyme catalyses campesterol + reduced [NADPH--hemoprotein reductase] + O2 = (22S)-22-hydroxycampesterol + oxidized [NADPH--hemoprotein reductase] + H2O + H(+). The catalysed reaction is campestanol + reduced [NADPH--hemoprotein reductase] + O2 = 6-deoxycathasterone + oxidized [NADPH--hemoprotein reductase] + H2O + H(+). It functions in the pathway plant hormone biosynthesis; brassinosteroid biosynthesis. Catalyzes the C22-alpha-hydroxylation step in brassinosteroid biosynthesis, which is the rate-limiting step in this biosynthetic pathway. Catalyzes the conversion of campesterol (CR) to (22S)-22-hydroxycampesterol (22-OHCR, 22-hydroxyCR) and of campestanol (CN) to 6-deoxocathasterone (6-deoxoCT). The sequence is that of Steroid (22S)-hydroxylase from Oryza sativa subsp. indica (Rice).